Consider the following 221-residue polypeptide: ATP phosphoribosyltransferase (221 aa).

This sequence belongs to the ATP phosphoribosyltransferase family. Short subfamily. In terms of assembly, heteromultimer composed of HisG and HisZ subunits.

The protein localises to the cytoplasm. The enzyme catalyses 1-(5-phospho-beta-D-ribosyl)-ATP + diphosphate = 5-phospho-alpha-D-ribose 1-diphosphate + ATP. It participates in amino-acid biosynthesis; L-histidine biosynthesis; L-histidine from 5-phospho-alpha-D-ribose 1-diphosphate: step 1/9. Functionally, catalyzes the condensation of ATP and 5-phosphoribose 1-diphosphate to form N'-(5'-phosphoribosyl)-ATP (PR-ATP). Has a crucial role in the pathway because the rate of histidine biosynthesis seems to be controlled primarily by regulation of HisG enzymatic activity. The sequence is that of ATP phosphoribosyltransferase from Anaeromyxobacter dehalogenans (strain 2CP-C).